A 316-amino-acid polypeptide reads, in one-letter code: Polyprenyl transferase prhE (316 aa).

9 consecutive transmembrane segments (helical) span residues 45-65, 69-89, 114-134, 135-155, 163-183, 188-208, 231-253, 257-276, and 296-316; these read VVGV…TFLL, VILS…NDLI, GAAL…LLLP, SQCA…PFGK, LILT…DMSP, IPTL…DIVY, ITDQ…GGIL, GFPF…LRFL, and SCLL…CVRL.

It belongs to the UbiA prenyltransferase family. Requires Mg(2+) as cofactor.

It localises to the membrane. The enzyme catalyses 3,5-dimethylorsellinate + (2E,6E)-farnesyl diphosphate = (3R)-3-farnesyl-6-hydroxy-2,3,5-trimethyl-4-oxocyclohexa-1,5-diene-1-carboxylate + diphosphate + H(+). Its pathway is secondary metabolite biosynthesis; terpenoid biosynthesis. In terms of biological role, polyprenyl transferase; part of the gene cluster that mediates the biosynthesis of paraherquonin, a meroterpenoid with a unique, highly congested hexacyclic molecular architecture. The first step of the pathway is the synthesis of 3,5-dimethylorsellinic acid (DMOA) by the polyketide synthase prhL. Synthesis of DMOA is followed by farnesylation by the prenyltransferase prhE, methylesterification by the methyl-transferase prhM, epoxidation of the prenyl chain by the flavin-dependent monooxygenase prhF, and cyclization of the farnesyl moiety by the terpene cyclase prhH, to yield the tetracyclic intermediate, protoaustinoid A. The short chain dehydrogenase prhI then oxidizes the C-3 alcohol group of the terpene cyclase product to transform protoaustinoid A into protoaustinoid B. The FAD-binding monooxygenase prhJ catalyzes the oxidation of protoaustinoid B into preaustinoid A which is further oxidized into preaustinoid A1 by FAD-binding monooxygenase phrK. Finally, prhA leads to berkeleydione via the berkeleyone B intermediate. PrhA is a multifunctional dioxygenase that first desaturates at C5-C6 to form berkeleyone B, followed by rearrangement of the A/B-ring to form the cycloheptadiene moiety in berkeleydione. Berkeleydione serves as the key intermediate for the biosynthesis of paraherquonin as well as many other meroterpenoids. The cytochrome P450 monooxygenases prhB, prhD, and prhN, as well as the isomerase prhC, are probably involved in the late stage of paraherquonin biosynthesis, after the production of berkeleydione. Especially prhC might be a multifunctional enzyme that catalyzes the D-ring expansion via intramolecular methoxy rearrangement, as well as the hydrolysis of the expanded D-ring. The protein is Polyprenyl transferase prhE of Penicillium brasilianum.